A 177-amino-acid chain; its full sequence is Large ribosomal subunit protein uL6 (177 aa).

This sequence belongs to the universal ribosomal protein uL6 family. In terms of assembly, part of the 50S ribosomal subunit.

Its function is as follows. This protein binds to the 23S rRNA, and is important in its secondary structure. It is located near the subunit interface in the base of the L7/L12 stalk, and near the tRNA binding site of the peptidyltransferase center. The chain is Large ribosomal subunit protein uL6 from Yersinia pseudotuberculosis serotype O:1b (strain IP 31758).